Reading from the N-terminus, the 220-residue chain is Ribosomal RNA large subunit methyltransferase E (220 aa).

5 residues coordinate S-adenosyl-L-methionine: Gly-60, Trp-62, Asp-92, Asp-108, and Asp-133. Lys-173 serves as the catalytic Proton acceptor. Positions 197–220 (RKPKASRDKSSETFILGRQLKQPR) are disordered.

Belongs to the class I-like SAM-binding methyltransferase superfamily. RNA methyltransferase RlmE family.

It localises to the cytoplasm. It carries out the reaction uridine(2552) in 23S rRNA + S-adenosyl-L-methionine = 2'-O-methyluridine(2552) in 23S rRNA + S-adenosyl-L-homocysteine + H(+). In terms of biological role, specifically methylates the uridine in position 2552 of 23S rRNA at the 2'-O position of the ribose in the fully assembled 50S ribosomal subunit. The protein is Ribosomal RNA large subunit methyltransferase E of Burkholderia ambifaria (strain ATCC BAA-244 / DSM 16087 / CCUG 44356 / LMG 19182 / AMMD) (Burkholderia cepacia (strain AMMD)).